The sequence spans 128 residues: Small ribosomal subunit protein uS11 (128 aa).

It belongs to the universal ribosomal protein uS11 family. Part of the 30S ribosomal subunit. Interacts with proteins S7 and S18. Binds to IF-3.

In terms of biological role, located on the platform of the 30S subunit, it bridges several disparate RNA helices of the 16S rRNA. Forms part of the Shine-Dalgarno cleft in the 70S ribosome. This chain is Small ribosomal subunit protein uS11, found in Vesicomyosocius okutanii subsp. Calyptogena okutanii (strain HA).